Reading from the N-terminus, the 888-residue chain is DNA mismatch repair protein MutS (888 aa).

641–648 (GPNMAGKS) provides a ligand contact to ATP.

This sequence belongs to the DNA mismatch repair MutS family.

In terms of biological role, this protein is involved in the repair of mismatches in DNA. It is possible that it carries out the mismatch recognition step. This protein has a weak ATPase activity. The polypeptide is DNA mismatch repair protein MutS (Rickettsia bellii (strain RML369-C)).